A 1396-amino-acid chain; its full sequence is Major capsid protein (1396 aa).

Belongs to the herpesviridae major capsid protein family. As to quaternary structure, homomultimer. Makes the hexons and eleven out of twelve pentons. Interacts with triplex proteins 1/TRX1 and 2/TRX2; adjacent capsomers are linked together in groups of three by triplexes, heterotrimeric complexes composed of one molecule of TRX1 and two molecules of TRX2. Interacts with scaffold protein; this interaction allows efficient MCP transport to the host nucleus. Interacts with capsid vertex component 2/CVC2. Interacts with the small capsomere-interacting protein/SCP.

The protein resides in the virion. It is found in the host nucleus. Its function is as follows. Self-assembles to form an icosahedral capsid with a T=16 symmetry, about 200 nm in diameter, and consisting of 150 hexons and 12 pentons (total of 162 capsomers). Hexons form the edges and faces of the capsid and are each composed of six MCP molecules. In contrast, one penton is found at each of the 12 vertices. Eleven of the pentons are MCP pentamers, while the last vertex is occupied by the portal complex. The capsid is surrounded by a layer of proteinaceous material designated the tegument which, in turn, is enclosed in an envelope of host cell-derived lipids containing virus-encoded glycoproteins. This chain is Major capsid protein, found in Varicella-zoster virus (strain Dumas) (HHV-3).